The sequence spans 327 residues: GPI-linked NAD(P)(+)--arginine ADP-ribosyltransferase 1 (327 aa).

The first 22 residues, 1 to 22, serve as a signal peptide directing secretion; that stretch reads MWVPAVANLLLLSLGLLEAIQA. Cystine bridges form between Cys-53-Cys-277 and Cys-174-Cys-224. N-linked (GlcNAc...) asparagine glycosylation is present at Asn-65. A TR mART core domain is found at 73 to 273; sequence KVYADGWALA…IYLKALGKRS (201 aa). NAD(+) is bound by residues Tyr-121 and Arg-179. Catalysis depends on residues Arg-179 and Ser-202. Position 233 (Ser-233) interacts with NAD(+). The active site involves Glu-240. Residue Asn-253 is glycosylated (N-linked (GlcNAc...) asparagine). The GPI-anchor amidated serine moiety is linked to residue Ser-295. The propeptide at 296-327 is removed in mature form; sequence ASAQERLSTAWSLLLLLAFLAVGPFPGSPGLF.

Belongs to the Arg-specific ADP-ribosyltransferase family. As to expression, primarily in skeletal and cardiac muscle.

The protein resides in the sarcoplasmic reticulum membrane. It catalyses the reaction L-arginyl-[protein] + NAD(+) = N(omega)-(ADP-D-ribosyl)-L-arginyl-[protein] + nicotinamide + H(+). Has ADP-ribosyltransferase activity toward GLP1R. In Oryctolagus cuniculus (Rabbit), this protein is GPI-linked NAD(P)(+)--arginine ADP-ribosyltransferase 1 (ART1).